A 554-amino-acid polypeptide reads, in one-letter code: Probable phospholipase D F09G2.8 (554 aa).

The Cytoplasmic segment spans residues 1–123 (MPLRLINFRQ…GNSRNRIIKP (123 aa)). The chain crosses the membrane as a helical; Signal-anchor for type II membrane protein span at residues 124-144 (ACVPISIVSLFIIALVFLPLF). Over 145–554 (NEEDLASPIK…DWNSEYSKDL (410 aa)) the chain is Extracellular. 4 N-linked (GlcNAc...) asparagine glycosylation sites follow: asparagine 181, asparagine 208, asparagine 244, and asparagine 266. Residues 272-299 (GSGIIHTKFILSDIATLYIGSANMDWKS) form the PLD phosphodiesterase 1 domain. Catalysis depends on residues histidine 277, lysine 279, and aspartate 284. 4 N-linked (GlcNAc...) asparagine glycosylation sites follow: asparagine 333, asparagine 350, asparagine 468, and asparagine 513. In terms of domain architecture, PLD phosphodiesterase 2 spans 492–518 (FTRVNHAKYMVTEDIAYIGTSNWSGDY).

It belongs to the phospholipase D family.

Its subcellular location is the membrane. It carries out the reaction a 1,2-diacyl-sn-glycero-3-phosphocholine + H2O = a 1,2-diacyl-sn-glycero-3-phosphate + choline + H(+). The sequence is that of Probable phospholipase D F09G2.8 from Caenorhabditis elegans.